The chain runs to 358 residues: Ribosomal RNA-processing protein 8 (358 aa).

Residues M1–E81 form a disordered region. Residues A30–A44 are compositionally biased toward basic residues. A phosphoserine mark is found at S75 and S76. Residues H185, G220, D238, and C267 each contribute to the S-adenosyl-L-methionine site.

The protein belongs to the methyltransferase superfamily. RRP8 family.

The protein resides in the nucleus. The protein localises to the nucleolus. Its function is as follows. Probable methyltransferase required to silence rDNA. The polypeptide is Ribosomal RNA-processing protein 8 (Drosophila melanogaster (Fruit fly)).